An 85-amino-acid polypeptide reads, in one-letter code: uncharacterized protein (85 aa).

A signal peptide spans 1-19; that stretch reads MKTIFTVGAVVLATCLLSG. Residue Cys20 is the site of N-palmitoyl cysteine attachment. Cys20 is lipidated: S-diacylglycerol cysteine.

The protein resides in the cell outer membrane. This is an uncharacterized protein from Escherichia coli (strain K12).